A 179-amino-acid chain; its full sequence is Apoptosis regulator Bcl-2 homolog (179 aa).

The BH1 motif lies at E76 to A95. Positions P126–S141 match the BH2 motif.

It belongs to the Bcl-2 family. In terms of assembly, interacts with host BECN1 (via BH3 homology domain); this interaction allows the virus to inhibit BECN1, and thus autophagy. Interacts with host BID. Interacts with host BAX.

It localises to the host mitochondrion. It is found in the host endoplasmic reticulum. Functionally, suppresses apoptosis in host cell to promote the viral replication. Has the ability to potentially bind to all the members of the proapoptotic Bcl-2 family. Inhibits autophagy by interacting with host Beclin 1 (BECN1). The sequence is that of Apoptosis regulator Bcl-2 homolog from Ornithodoros (relapsing fever ticks).